The primary structure comprises 513 residues: Histidine ammonia-lyase (513 aa).

Residues 142–144 constitute a cross-link (5-imidazolinone (Ala-Gly)); the sequence is ASG. Ser-143 carries the 2,3-didehydroalanine (Ser) modification.

This sequence belongs to the PAL/histidase family. Post-translationally, contains an active site 4-methylidene-imidazol-5-one (MIO), which is formed autocatalytically by cyclization and dehydration of residues Ala-Ser-Gly.

It is found in the cytoplasm. The catalysed reaction is L-histidine = trans-urocanate + NH4(+). It participates in amino-acid degradation; L-histidine degradation into L-glutamate; N-formimidoyl-L-glutamate from L-histidine: step 1/3. This is Histidine ammonia-lyase from Methylobacterium sp. (strain 4-46).